Here is a 71-residue protein sequence, read N- to C-terminus: Beta-defensin 131A (71 aa).

The signal sequence occupies residues 1–22 (MRVLFFVFGVLSLMFTVPPARS). Cystine bridges form between cysteine 29-cysteine 57, cysteine 37-cysteine 51, and cysteine 41-cysteine 58.

The protein belongs to the beta-defensin family.

It is found in the secreted. Has antibacterial activity. Upon stimulation with lipoteichoic acid, promotes cytokines and chemokines production and secretion. In Pan troglodytes (Chimpanzee), this protein is Beta-defensin 131A.